The chain runs to 197 residues: Imidazoleglycerol-phosphate dehydratase (197 aa).

Belongs to the imidazoleglycerol-phosphate dehydratase family.

The protein resides in the cytoplasm. The catalysed reaction is D-erythro-1-(imidazol-4-yl)glycerol 3-phosphate = 3-(imidazol-4-yl)-2-oxopropyl phosphate + H2O. Its pathway is amino-acid biosynthesis; L-histidine biosynthesis; L-histidine from 5-phospho-alpha-D-ribose 1-diphosphate: step 6/9. The sequence is that of Imidazoleglycerol-phosphate dehydratase from Cellvibrio japonicus (strain Ueda107) (Pseudomonas fluorescens subsp. cellulosa).